We begin with the raw amino-acid sequence, 443 residues long: MYLPQEIIRKKRDNKELTAEEINFFIQGVAKETVSEGQIAAFAMAVYFNEMTMPERIALTCAMRDSGMVIDWSHMNFDGPIVDKHSTGGVGDVTSLMLGPMVAACGGYVPMISGRGLGHTGGTLDKLESIAGYNITPSNDVFGKVTKEAGVAIIGQTGDLAPADKRVYATRDVTATVDNISLITASILSKKLAAGLDSLVMDVKVGSGAFMPTYEASEELAKSIVAVANGAGTKTTALLTDMNQVLASTAGNALEVREAIRFLTGEYRNPRLYEVTMALCAEMLVIANLAKDEQDARAKLQTVLDNGKAAECFGKMVFGLGGPSDIIENYDNHLESAQIIKPVFADTTGFVQAMDTRDLGMAVVGMGGGRRVASDTIDYAVGLSDMIRLGQTADNQQPLAMIHARNEEQWQQAANAVKAAIVISEKQPEATPEVYRKIRPEDV.

This sequence belongs to the thymidine/pyrimidine-nucleoside phosphorylase family. Homodimer.

The catalysed reaction is thymidine + phosphate = 2-deoxy-alpha-D-ribose 1-phosphate + thymine. Its pathway is pyrimidine metabolism; dTMP biosynthesis via salvage pathway; dTMP from thymine: step 1/2. Functionally, the enzymes which catalyze the reversible phosphorolysis of pyrimidine nucleosides are involved in the degradation of these compounds and in their utilization as carbon and energy sources, or in the rescue of pyrimidine bases for nucleotide synthesis. The polypeptide is Thymidine phosphorylase (Aliivibrio fischeri (strain ATCC 700601 / ES114) (Vibrio fischeri)).